Here is a 591-residue protein sequence, read N- to C-terminus: V-type ATP synthase alpha chain (591 aa).

Gly-242–Thr-249 provides a ligand contact to ATP.

The protein belongs to the ATPase alpha/beta chains family.

The catalysed reaction is ATP + H2O + 4 H(+)(in) = ADP + phosphate + 5 H(+)(out). Functionally, produces ATP from ADP in the presence of a proton gradient across the membrane. The V-type alpha chain is a catalytic subunit. This chain is V-type ATP synthase alpha chain, found in Chlamydia caviae (strain ATCC VR-813 / DSM 19441 / 03DC25 / GPIC) (Chlamydophila caviae).